A 344-amino-acid polypeptide reads, in one-letter code: Nuclear distribution protein nudE-like 1-B (344 aa).

Residues 13–190 adopt a coiled-coil conformation; that stretch reads KEEIVYWREL…LAVRERQTDG (178 aa). 2 disordered regions span residues 186-209 and 325-344; these read RQTD…TDSS and PPGV…PLSV. A compositionally biased stretch (pro residues) spans 333-344; the sequence is PPSPPGLLPLSV.

This sequence belongs to the nudE family. In terms of processing, phosphorylated in mitosis.

The protein resides in the cytoplasm. It is found in the cytoskeleton. The protein localises to the microtubule organizing center. It localises to the centrosome. Its subcellular location is the spindle. In terms of biological role, required for organization of the cellular microtubule array and microtubule anchoring at the centrosome. Positively regulates the activity of the minus-end directed microtubule motor protein dynein. May enhance dynein-mediated microtubule sliding by targeting dynein to the microtubule plus end. Positively regulates lysosome peripheral distribution and ruffled border formation in osteoclasts. The chain is Nuclear distribution protein nudE-like 1-B (ndel1-b) from Xenopus laevis (African clawed frog).